We begin with the raw amino-acid sequence, 529 residues long: Probable pectinesterase/pectinesterase inhibitor 35 (529 aa).

The N-terminal stretch at 1–34 (MATTSFSLPNHKFGIKLMLFLVLNLLSLQTSVFA) is a signal peptide. A pectinesterase inhibitor 35 region spans residues 36-180 (SSNSKFTKIS…TGLLTNSLDM (145 aa)). The segment at 42-64 (TKISRHPNSDSSSRTKPSTSSNK) is disordered. Residues 50–64 (SDSSSRTKPSTSSNK) are compositionally biased toward low complexity. Residues Asn-86, Asn-169, and Asn-193 are each glycosylated (N-linked (GlcNAc...) asparagine). Residues 228-514 (HAVVAADGSG…FTVSGFIDGN (287 aa)) form a pectinesterase 35 region. 2 residues coordinate substrate: Thr-302 and Gln-332. Asp-355 serves as the catalytic Proton donor; for pectinesterase activity. Catalysis depends on Asp-376, which acts as the Nucleophile; for pectinesterase activity. Substrate is bound by residues Arg-434 and Trp-436.

It in the N-terminal section; belongs to the PMEI family. The protein in the C-terminal section; belongs to the pectinesterase family. As to expression, expressed in siliques.

Its subcellular location is the secreted. It localises to the cell wall. It carries out the reaction [(1-&gt;4)-alpha-D-galacturonosyl methyl ester](n) + n H2O = [(1-&gt;4)-alpha-D-galacturonosyl](n) + n methanol + n H(+). It participates in glycan metabolism; pectin degradation; 2-dehydro-3-deoxy-D-gluconate from pectin: step 1/5. Its function is as follows. Acts in the modification of cell walls via demethylesterification of cell wall pectin. This chain is Probable pectinesterase/pectinesterase inhibitor 35 (PME35), found in Arabidopsis thaliana (Mouse-ear cress).